Consider the following 924-residue polypeptide: MSRSRQPPLVTGISPNEGIPWTKVTIRGENLGTGPTDLIGLTICGHNCLLTAEWMSASKIVCRVGQAKNDKGDIIVTTKSGGKGTSTVSFKLLKPEKIGILDQSAVWVDEMNYYDMRTDRNKGIPPLSLRPANPLGIEIEKCKLPQKNLEVLFHGMSADFTSENFSAAWYLIENHSTTSFEQLKMAVTNLKRQANKKSEGSLAYVKGGLSTFFEAQDALSAIHQKLEADGTEKVEGSMTQKLENVLNRASNTADTLFQEVLGRKDKADSTRNALNVLQRFKFLFNLPLNIKRNIQKGDYDVVINDYEKAKSLFGKTEVQVFKKYYAEVEAGIEDLRELLLKKLLETPSTLHDQKRYIRYLSDLHAPGDPAWQCIGAQHKWTLKLMQDCKEGHMKSLKGHPGPHSPMLDLDNDVRPSVLGHLSQTASLKRGSSFQSGRDDTWRYKTPHRVAFVEKLTKLVLSQLPNFWKLWISYVNGSLFSETAEKSGQSERSKNVRQRQNDFKKMIQEVMHSLVKLIRGALLPLSLREGDGRQYGGWEVQAELSGQWLAHVIQTIRLTYESLTALEIPNDMLQIIQDLILDLRIRCIMVTLQHTAEEIKRLAEKEDWVVDNEGLTSLPCQFEQSIVHSLQSLKGVVDCKPGEASVFQQPKTQEEVCQLCINIMQVFIYCLEQLSTKPDADIDTTHLSVDVSSPDLFGSIHEDFSLTSEQRLLIVLSNCCYLERHTFLNIAEHFEKHNFQGIEKITQVSMASLKELDQRLFENYIELKADPIVGSLEPGIYAGYFDWKDCLPPAGVRNYLKEALVNIIAVHAEVFTISKELVPRVLARVVEAVSEELSRLMQCVSSFSRNGALQARLEICALRDTVAIYLTSESRSSFKQALEALPQLASGADKKSLEELLNKFKSSMHLQLTCFQAASPAVMKT.

Residues 8-93 form the IPT/TIG domain; that stretch reads PLVTGISPNE…GTSTVSFKLL (86 aa). Positions 240–260 form a coiled coil; it reads QKLENVLNRASNTADTLFQEV. A phosphoserine mark is found at Ser431, Ser432, and Ser435. At Thr440 the chain carries Phosphothreonine. Lys454 carries the post-translational modification N6-acetyllysine.

This sequence belongs to the SEC5 family. As to quaternary structure, the exocyst complex is composed of EXOC1, EXOC2, EXOC3, EXOC4, EXOC5, EXOC6, EXOC7 and EXOC8. Interacts with EXOC3L1. Interacts with GNEFR/DELGEF; this interaction occurs only in the presence of magnesium or manganese and is stimulated by dCTP or GTP. Interacts with RALA and RALB. Interacts with ARL13B; regulates ARL13B localization to the cilium membrane.

It is found in the midbody. The protein localises to the midbody ring. Its function is as follows. Component of the exocyst complex involved in the docking of exocytic vesicles with fusion sites on the plasma membrane. This is Exocyst complex component 2 (Exoc2) from Mus musculus (Mouse).